A 77-amino-acid polypeptide reads, in one-letter code: NADH-ubiquinone oxidoreductase chain 4L (77 aa).

2 helical membrane-spanning segments follow: residues 15–37 and 44–64; these read WQRLIFILISLEFMMLSLFLKFS and MFFYFMCFSVISSILGMVVMV.

This sequence belongs to the complex I subunit 4L family.

It is found in the mitochondrion membrane. The enzyme catalyses a ubiquinone + NADH + 5 H(+)(in) = a ubiquinol + NAD(+) + 4 H(+)(out). In terms of biological role, core subunit of the mitochondrial membrane respiratory chain NADH dehydrogenase (Complex I) that is believed to belong to the minimal assembly required for catalysis. Complex I functions in the transfer of electrons from NADH to the respiratory chain. The immediate electron acceptor for the enzyme is believed to be ubiquinone. The sequence is that of NADH-ubiquinone oxidoreductase chain 4L from Caenorhabditis elegans.